A 521-amino-acid chain; its full sequence is Spermidine transporter DUR31 (521 aa).

The chain crosses the membrane as a helical span at residues 11–31 (AIIYLSYAFMLATGLFLAWKF). The N-linked (GlcNAc...) asparagine glycan is linked to Asn41. 12 consecutive transmembrane segments (helical) span residues 47–67 (IPLALNFVASAMGVGIITTYA), 79–99 (LVYTICGAIPIVGFAVVGPVI), 117–137 (FGMVTALYLSAFTCLTMFLFM), 156–176 (ALGAVIVECVVTTIYTFFGGF), 187–207 (GVCVLLLLIICAAGMGSYIEI), 227–247 (LVYILFVAIVTNDCFMSGFWL), 264–284 (IAAFVTFAICTLIGTTGFLAV), 310–330 (WLVAFVLIFCIVLSTCTFDSL), 354–374 (IMLILIMVPIVVLAVKVADNI), 377–397 (IYLIADLVSAAIIPSVFLGLA), 406–426 (GFDVMAGGLGALLGVFIFGTV), and 453–473 (FGAFVIAPVGGVIITLASAAL).

The protein belongs to the sodium:solute symporter (SSF) (TC 2.A.21) family.

It is found in the membrane. It carries out the reaction spermidine(in) = spermidine(out). In terms of biological role, spermidine transporter that is also used by salivary gland-secreted histatin 5 (Hst 5) to enter into candidal cells. A major component of host nonimmune defense systems is salivary histatins, a family of small (3-4 kDa), histidine-rich, cationic proteins secreted by major salivary glands in humans and higher primates. Hst 5 is the most potent of the 12 histatin family members and has fungicidal activity against blastoconidial and filamentous forms of Candida albicans. DUR31 only functions under high concentrations of Hst 5. Hst 5 cojugates to spermidine to be uptaken by DUR31. The chain is Spermidine transporter DUR31 from Candida albicans (strain SC5314 / ATCC MYA-2876) (Yeast).